The following is a 299-amino-acid chain: Ophiobolin family sesterterpenoid biosynthesis cluster acetyltransferase (299 aa).

Residues 1-20 (MYFFRALLSPVVLWPALVSG) form the signal peptide. Asn28, Asn58, Asn77, Asn126, Asn177, Asn212, and Asn282 each carry an N-linked (GlcNAc...) asparagine glycan.

The protein belongs to the bfoA family.

It participates in secondary metabolite biosynthesis; terpenoid biosynthesis. Functionally, acetyltransferase; part of the gene cluster that mediates the biosynthesis of an ophiobolin family sesterterpenoid. Its function is as follows. Sesterterpenoid synthase; part of the gene cluster that mediates the biosynthesis of an ophiobolin family sesterterpenoid. The polypeptide is Ophiobolin family sesterterpenoid biosynthesis cluster acetyltransferase (Aspergillus terreus).